The primary structure comprises 347 residues: Iron-sulfur cluster assembly protein SufC (347 aa).

Residues 100–346 form the ABC transporter domain; that stretch reads LEIKDLHAIE…ENKGYSQFLK (247 aa). 134 to 141 provides a ligand contact to ATP; it reads GRNGSGKS.

The protein belongs to the ABC transporter superfamily. Ycf16 family. Component of a complex composed of SufB, SufC and SufD in a stoichiometric ratio of 1:2:1. Interacts with SufB. Interacts with SufD; the interaction enhances the ATPase activity of SufC. Proteolytically cleaved.

It localises to the plastid. The protein resides in the apicoplast. The catalysed reaction is ATP + H2O = ADP + phosphate + H(+). It participates in cofactor biosynthesis; iron-sulfur cluster biosynthesis. Participates in the sulfur mobilization (SUF) pathway for iron-sulfur (Fe-S) cluster biogenesis. As part of a complex consisting of SufB-SufC(2)-SufD, involved in assembly of [4Fe-4S] clusters. Exhibits ATPase activity. The protein is Iron-sulfur cluster assembly protein SufC of Plasmodium falciparum (isolate 3D7).